A 196-amino-acid polypeptide reads, in one-letter code: UPF0314 protein Oant_0840 (196 aa).

Transmembrane regions (helical) follow at residues 15–35 (WGLG…WLYF), 65–85 (WYTL…TVIA), 127–147 (FGDS…GFLI), and 151–171 (LPTK…LIVI).

Belongs to the UPF0314 family.

Its subcellular location is the cell membrane. The chain is UPF0314 protein Oant_0840 from Brucella anthropi (strain ATCC 49188 / DSM 6882 / CCUG 24695 / JCM 21032 / LMG 3331 / NBRC 15819 / NCTC 12168 / Alc 37) (Ochrobactrum anthropi).